Reading from the N-terminus, the 318-residue chain is Ribose-phosphate pyrophosphokinase (318 aa).

ATP is bound by residues 46 to 48 (DGE) and 105 to 106 (RQ). Mg(2+)-binding residues include histidine 139 and aspartate 178. Residue lysine 201 is part of the active site. D-ribose 5-phosphate-binding positions include arginine 203, aspartate 227, and 231–235 (DTAGT).

This sequence belongs to the ribose-phosphate pyrophosphokinase family. Class I subfamily. In terms of assembly, homohexamer. Requires Mg(2+) as cofactor.

Its subcellular location is the cytoplasm. The enzyme catalyses D-ribose 5-phosphate + ATP = 5-phospho-alpha-D-ribose 1-diphosphate + AMP + H(+). The protein operates within metabolic intermediate biosynthesis; 5-phospho-alpha-D-ribose 1-diphosphate biosynthesis; 5-phospho-alpha-D-ribose 1-diphosphate from D-ribose 5-phosphate (route I): step 1/1. In terms of biological role, involved in the biosynthesis of the central metabolite phospho-alpha-D-ribosyl-1-pyrophosphate (PRPP) via the transfer of pyrophosphoryl group from ATP to 1-hydroxyl of ribose-5-phosphate (Rib-5-P). In Helicobacter pylori (strain ATCC 700392 / 26695) (Campylobacter pylori), this protein is Ribose-phosphate pyrophosphokinase.